The chain runs to 378 residues: tRNA (guanine(26)-N(2))-dimethyltransferase (378 aa).

The 371-residue stretch at 4–374 (KEVTEGKVRI…KGYEEIIRCV (371 aa)) folds into the Trm1 methyltransferase domain. The S-adenosyl-L-methionine site is built by R44, R69, D87, D114, and A115. The Zn(2+) site is built by C246, C249, C263, and C266.

This sequence belongs to the class I-like SAM-binding methyltransferase superfamily. Trm1 family.

It catalyses the reaction guanosine(26) in tRNA + 2 S-adenosyl-L-methionine = N(2)-dimethylguanosine(26) in tRNA + 2 S-adenosyl-L-homocysteine + 2 H(+). Its function is as follows. Dimethylates a single guanine residue at position 26 of a number of tRNAs using S-adenosyl-L-methionine as donor of the methyl groups. The chain is tRNA (guanine(26)-N(2))-dimethyltransferase from Saccharolobus islandicus (strain M.14.25 / Kamchatka #1) (Sulfolobus islandicus).